Here is a 479-residue protein sequence, read N- to C-terminus: MVMAAKKGPGPGGGVGGSKAEAEAASEVWCRRVRELGGCSQAGNRHCFECAQRGVTYVDITVGSFVCTTCSGLLRGLNPPHRVKSISMTTFTEPEVLFLQSRGNEVCRKIWLGLFDARTSLIPDSRDPQKVKEFLQEKYEKKRWYVPPEQVKGPSYSKGSVSATPVQGSVPEGKPIRTLLGDPVPSLSDPASTSSQPGSQSQARSSSQARSSQPPSHSSTKKASTDLLADIGGDPFAAPQVVPAFASFPGFGVGQTPAHGGFANFDAFSSSPSSSTFGSLPPSVQAPFQAQPTPAGSGQMSAFGVAPLAAASQPNNLADVGGLLGPRMAAGGLPGSVFGMPSQVPALQSAVPGVSGSGGLPFGAYTNPFATPAQAQLPSTNPFQPNGLASGPGFGMSSVRPGLLQPVPPSGAFASPFSAPVFPTQAGLADQQNGSSFGDLGTSKLGQRPLSQPAGISTNPFMTGSSAFASKPPTTNPFL.

The region spanning 27–153 is the Arf-GAP domain; sequence EVWCRRVREL…WYVPPEQVKG (127 aa). The C4-type zinc-finger motif lies at 47–70; sequence CFECAQRGVTYVDITVGSFVCTTC. Disordered regions lie at residues 150 to 223 and 450 to 479; these read QVKG…TKKA and LSQPAGISTNPFMTGSSAFASKPPTTNPFL. Residues 157-167 show a composition bias toward polar residues; it reads SKGSVSATPVQ. Lys174 carries the post-translational modification N6-acetyllysine. The span at 194-218 shows a compositional bias: low complexity; the sequence is SSQPGSQSQARSSSQARSSQPPSHS. Polar residues predominate over residues 454–479; it reads AGISTNPFMTGSSAFASKPPTTNPFL.

As to quaternary structure, interacts with EPS15R.

In Mus musculus (Mouse), this protein is Arf-GAP domain and FG repeat-containing protein 2 (Agfg2).